A 101-amino-acid polypeptide reads, in one-letter code: Urease subunit beta (101 aa).

Belongs to the urease beta subunit family. As to quaternary structure, heterotrimer of UreA (gamma), UreB (beta) and UreC (alpha) subunits. Three heterotrimers associate to form the active enzyme.

The protein localises to the cytoplasm. It catalyses the reaction urea + 2 H2O + H(+) = hydrogencarbonate + 2 NH4(+). The protein operates within nitrogen metabolism; urea degradation; CO(2) and NH(3) from urea (urease route): step 1/1. This chain is Urease subunit beta, found in Haemophilus influenzae (strain 86-028NP).